Consider the following 854-residue polypeptide: Alkaline phosphatase-like protein PglZ (854 aa).

Belongs to the alkaline phosphatase superfamily.

BREX systems (bacteriophage exclusion) provide immunity against bacteriophage. A core protein of a type 1 BREX system. This system allows phage adsorption but prevents phage DNA replication, without degradation of the phage DNA. Methylation of bacterial DNA by PglX probably guides self/non-self discrimination. When the brxA-brxB-brxC-pglX and pglZ-brxL operons are transformed into a susceptible B.subtilis strain (BEST7003) they confer resistance to bacteriophages SPbeta, SP16, Zeta, phi3T and SP02 and partial protection to phages SP01 and SP82G (these include lytic and temperate phage). They do not protect against phages phi105, rho10 or rho14. Additionally confers a very slight reduction in efficiency of plasmid transformation. The polypeptide is Alkaline phosphatase-like protein PglZ (Bacillus cereus (strain H3081.97)).